The sequence spans 371 residues: Vasopressin V2 receptor (371 aa).

A disordered region spans residues 1–30 (MLMASTTSAVPGHPSLPSLPSNSSQERPLD). Topologically, residues 1–38 (MLMASTTSAVPGHPSLPSLPSNSSQERPLDTRDPLLAR) are extracellular. Over residues 15–24 (SLPSLPSNSS) the composition is skewed to low complexity. Asparagine 22 carries N-linked (GlcNAc...) asparagine glycosylation. The chain crosses the membrane as a helical span at residues 39-63 (AELALLSIVFVAVALSNGLVLAALA). Residues 64–77 (RRGRRGHWAPIHVF) lie on the Cytoplasmic side of the membrane. Residues 78–98 (IGHLCLADLAVALFQVLPQLA) traverse the membrane as a helical segment. Residues 99–113 (WKATDRFRGPDALCR) lie on the Extracellular side of the membrane. The chain crosses the membrane as a helical span at residues 114–135 (AVKYLQMVGMYASSYMILAMTL). Over 136 to 159 (DRHRAICRPMLAYRHGSGAHWNRP) the chain is Cytoplasmic. A helical membrane pass occupies residues 160–180 (VLVAWAFSLLLSLPQLFIFAQ). Topologically, residues 181–200 (RNVEGGSGVTDCWACFAEPW) are extracellular. A helical membrane pass occupies residues 201–220 (GRRTYVTWIALMVFVAPTLG). The Cytoplasmic portion of the chain corresponds to 221-271 (IAACQVLIFREIHASLVPGPSERPGGRRRGRRTGSPGEGAHVSAAVAKTVR). A disordered region spans residues 240 to 259 (PSERPGGRRRGRRTGSPGEG). Residues 272–293 (MTLVIVVVYVLCWAPFFLVQLW) traverse the membrane as a helical segment. Topologically, residues 294-308 (AAWDPEAPLEGAPFV) are extracellular. Residues 309–328 (LLMLLASLNSCTNPWIYASF) form a helical membrane-spanning segment. Over 329-371 (SSSVSSELRSLLCCARGRTPPSLGPQDESCTTASSSLAKDTSS) the chain is Cytoplasmic. Residues cysteine 341 and cysteine 342 are each lipidated (S-palmitoyl cysteine). The disordered stretch occupies residues 349-371 (PSLGPQDESCTTASSSLAKDTSS). The span at 356 to 371 (ESCTTASSSLAKDTSS) shows a compositional bias: polar residues.

It belongs to the G-protein coupled receptor 1 family. Vasopressin/oxytocin receptor subfamily. Interacts with ARRDC4. Identified in a complex containing at least ARRDC4, V2R and HGS. Interacts with TMEM147. In terms of tissue distribution, kidney.

The protein localises to the cell membrane. In terms of biological role, receptor for arginine vasopressin. The activity of this receptor is mediated by G proteins which activate adenylate cyclase. Involved in renal water reabsorption. This chain is Vasopressin V2 receptor (AVPR2), found in Homo sapiens (Human).